The following is a 202-amino-acid chain: MNFLRKIVKNCRDEDTQKPSPVSAPLDDDDLWLPPPEYVPLKELTSKKNRRNFCINGGVKVCSPNGYSFGILRHILRSFDEIYSGNHRMVGLVKVVIGLALSGAPVPEGMNWVYKLRRTLIFQWADSRGPLEGEELEYSQEITWDDNTEFVGLQIRVSAKQCHIRGRIWCINMNSRAGQLWSDMSLQTQRSEEDKDSSLLLE.

The PPXY motif motif lies at 35-38 (PPEY). An essential for glycoprotein binding region spans residues 115–151 (KLRRTLIFQWADSRGPLEGEELEYSQEITWDDNTEFV).

This sequence belongs to the lyssavirus matrix protein family. Homomultimer. Interacts with nucleoprotein and with the cytoplasmic domain of glycoprotein. Interacts with host ATP6V1A; this interaction plays an important role in virion uncoating after viral entry.

It is found in the virion membrane. It localises to the host endomembrane system. The protein localises to the host cytoplasm. Plays a major role in assembly, budding and uncoating of virion after membrane fusion. Completely covers the ribonucleoprotein coil and keep it in condensed bullet-shaped form. Inhibits viral transcription and stimulates replication. Plays a major role in early induction of TRAIL-mediated apoptosis in infected neurons. Inhibits the integrated stress response (ISR) in the infected cell by blocking the formation of stress granules. The protein is Matrix protein (M) of Homo sapiens (Human).